Consider the following 271-residue polypeptide: MDDRLTIFIISDSLGVTARTIAKACIQQFPNHDNWQFERYSNINNKELLDKVLEKAKDKNVCLMFSLVDDDLARYAQERSEEEHFVYVDLLSNVIKAMSKLSGVEPLGQPGLLRKLDKHYFKRVEAIEFAVKYDDGKDPRGILKADLILLGISRTSKTPLSMYLADKHLKVVNIPIVPEVPLPKELNEVSPKKIVGLTNSVERLSQVRKERLRSLGVSGTASYANKDRIYEEAAYAEEVMRKLKCPIINVSDKAIEETATIILEMIKENQL.

Position 151-158 (151-158) interacts with ADP; sequence GISRTSKT.

The protein belongs to the pyruvate, phosphate/water dikinase regulatory protein family. PDRP subfamily.

It carries out the reaction N(tele)-phospho-L-histidyl/L-threonyl-[pyruvate, phosphate dikinase] + ADP = N(tele)-phospho-L-histidyl/O-phospho-L-threonyl-[pyruvate, phosphate dikinase] + AMP + H(+). It catalyses the reaction N(tele)-phospho-L-histidyl/O-phospho-L-threonyl-[pyruvate, phosphate dikinase] + phosphate + H(+) = N(tele)-phospho-L-histidyl/L-threonyl-[pyruvate, phosphate dikinase] + diphosphate. Bifunctional serine/threonine kinase and phosphorylase involved in the regulation of the pyruvate, phosphate dikinase (PPDK) by catalyzing its phosphorylation/dephosphorylation. The chain is Putative pyruvate, phosphate dikinase regulatory protein from Streptococcus uberis (strain ATCC BAA-854 / 0140J).